A 289-amino-acid chain; its full sequence is Nucleotide-binding protein Francci3_1634 (289 aa).

Position 13–20 (13–20 (GLSGAGRS)) interacts with ATP. Position 64-67 (64-67 (DVRG)) interacts with GTP.

This sequence belongs to the RapZ-like family.

Its function is as follows. Displays ATPase and GTPase activities. The polypeptide is Nucleotide-binding protein Francci3_1634 (Frankia casuarinae (strain DSM 45818 / CECT 9043 / HFP020203 / CcI3)).